The primary structure comprises 130 residues: Small ribosomal subunit protein uS9 (130 aa).

The protein belongs to the universal ribosomal protein uS9 family.

The chain is Small ribosomal subunit protein uS9 from Buchnera aphidicola subsp. Baizongia pistaciae (strain Bp).